Reading from the N-terminus, the 367-residue chain is Zinc transport system membrane protein TroD (367 aa).

A run of 9 helical transmembrane segments spans residues 5–25 (VVLI…FLVL), 28–48 (ISLM…LGYF), 56–76 (FVPF…AELL), 87–107 (AVGL…SLYA), 140–160 (SLVQ…LFFK), 170–190 (VLAT…MLAV), 201–221 (VGAV…LLLT), 224–244 (LLLM…SGLF), and 251–271 (GSIA…VYLF).

This sequence belongs to the ABC-3 integral membrane protein family.

Its subcellular location is the cell membrane. In terms of biological role, part of an ATP-driven transport system TroABCD for zinc. This chain is Zinc transport system membrane protein TroD (troD), found in Treponema pallidum (strain Nichols).